We begin with the raw amino-acid sequence, 219 residues long: 2-hydroxy-3-keto-5-methylthiopentenyl-1-phosphate phosphatase (219 aa).

The protein belongs to the HAD-like hydrolase superfamily. MtnX family.

The enzyme catalyses 2-hydroxy-5-methylsulfanyl-3-oxopent-1-enyl phosphate + H2O = 1,2-dihydroxy-5-(methylsulfanyl)pent-1-en-3-one + phosphate. It functions in the pathway amino-acid biosynthesis; L-methionine biosynthesis via salvage pathway; L-methionine from S-methyl-5-thio-alpha-D-ribose 1-phosphate: step 4/6. In terms of biological role, dephosphorylates 2-hydroxy-3-keto-5-methylthiopentenyl-1-phosphate (HK-MTPenyl-1-P) yielding 1,2-dihydroxy-3-keto-5-methylthiopentene (DHK-MTPene). The chain is 2-hydroxy-3-keto-5-methylthiopentenyl-1-phosphate phosphatase from Bacillus thuringiensis subsp. konkukian (strain 97-27).